A 310-amino-acid chain; its full sequence is tRNA dimethylallyltransferase (310 aa).

13 to 20 (GPTASGKT) is a binding site for ATP. Substrate is bound at residue 15 to 20 (TASGKT). 4 interaction with substrate tRNA regions span residues 38–41 (DSAL), 162–166 (QRLSR), 243–248 (RCVGYR), and 276–283 (KRQITWLR).

The protein belongs to the IPP transferase family. In terms of assembly, monomer. Requires Mg(2+) as cofactor.

The catalysed reaction is adenosine(37) in tRNA + dimethylallyl diphosphate = N(6)-dimethylallyladenosine(37) in tRNA + diphosphate. Catalyzes the transfer of a dimethylallyl group onto the adenine at position 37 in tRNAs that read codons beginning with uridine, leading to the formation of N6-(dimethylallyl)adenosine (i(6)A). In Vibrio parahaemolyticus serotype O3:K6 (strain RIMD 2210633), this protein is tRNA dimethylallyltransferase.